Here is a 393-residue protein sequence, read N- to C-terminus: NAD(P)H-quinone oxidoreductase subunit H, chloroplastic (393 aa).

It belongs to the complex I 49 kDa subunit family. As to quaternary structure, NDH is composed of at least 16 different subunits, 5 of which are encoded in the nucleus.

It localises to the plastid. The protein resides in the chloroplast thylakoid membrane. The catalysed reaction is a plastoquinone + NADH + (n+1) H(+)(in) = a plastoquinol + NAD(+) + n H(+)(out). It catalyses the reaction a plastoquinone + NADPH + (n+1) H(+)(in) = a plastoquinol + NADP(+) + n H(+)(out). NDH shuttles electrons from NAD(P)H:plastoquinone, via FMN and iron-sulfur (Fe-S) centers, to quinones in the photosynthetic chain and possibly in a chloroplast respiratory chain. The immediate electron acceptor for the enzyme in this species is believed to be plastoquinone. Couples the redox reaction to proton translocation, and thus conserves the redox energy in a proton gradient. This Nasturtium officinale (Watercress) protein is NAD(P)H-quinone oxidoreductase subunit H, chloroplastic.